Consider the following 233-residue polypeptide: Pathogenesis-related thaumatin-like protein 3.2 (233 aa).

An N-terminal signal peptide occupies residues 1-22 (MARAMHTVWIALVPTLFVFLQG). Cystine bridges form between Cys-36/Cys-232, Cys-77/Cys-87, Cys-92/Cys-98, Cys-145/Cys-221, Cys-151/Cys-204, Cys-159/Cys-169, Cys-173/Cys-182, and Cys-183/Cys-191. Asn-195 is a glycosylation site (N-linked (GlcNAc...) asparagine).

The protein belongs to the thaumatin family. Strongly expressed in roots and in female and male strobili, and, to a lower extent, in cotyledons, leaves, stems and pollen grains.

In terms of biological role, may be involved in disease resistance. In Cryptomeria japonica (Japanese cedar), this protein is Pathogenesis-related thaumatin-like protein 3.2.